The sequence spans 143 residues: Antiholin-like protein LrgA (143 aa).

4 helical membrane passes run 6–26, 30–50, 61–81, and 97–117; these read VYSF…SNII, LPIP…LLCL, LGTA…ISVI, and VIVV…QFIL.

This sequence belongs to the CidA/LrgA family. LrgA subfamily.

The protein resides in the cell membrane. Functionally, inhibits the expression or activity of extracellular murein hydrolases by interacting, possibly with LrgB, with the holin-like protein CidA. The LrgAB and CidA proteins may affect the proton motive force of the membrane. May be involved in programmed cell death (PCD), possibly triggering PCD in response to antibiotics and environmental stresses. The protein is Antiholin-like protein LrgA of Bacillus anthracis (strain A0248).